We begin with the raw amino-acid sequence, 182 residues long: ADP-ribosylation factor-like protein 3 (182 aa).

A lipid anchor (N-myristoyl glycine) is attached at Gly-2. Ser-5 carries the phosphoserine modification. GTP-binding positions include 24-31, Thr-48, 67-71, Gly-70, 126-129, and 159-161; these read GLDNAGKT, DIGGQ, NKQD, and SAL. Mg(2+) is bound by residues Thr-31 and Thr-48.

This sequence belongs to the small GTPase superfamily. Arf family. In terms of assembly, found in a complex with ARL3, RP2 and UNC119 (or UNC119B); RP2 induces hydrolysis of GTP ARL3 in the complex, leading to the release of UNC119 (or UNC119B). Interacts with RP2; interaction is direct and stimulated with the activated GTP-bound form of ARL3. Interacts with SYS1. Interacts with ARL2BP; the GTP-bound form interacts with ARL2BP. Microtubule-associated protein. Does not interact with TBCC. Interacts with RP2. Interacts with PDE6D; the interaction occurs specifically with the GTP-bound form of ARL3. Interacts with GGA1; the interaction recruits PKD1:PKD2 complex to trans-Golgi network and is required for ciliary targeting of PKD1:PKD2 complex. Interacts with DNAAF9.

It localises to the golgi apparatus membrane. The protein localises to the cytoplasm. Its subcellular location is the cytoskeleton. It is found in the spindle. The protein resides in the nucleus. It localises to the microtubule organizing center. The protein localises to the centrosome. Its subcellular location is the cell projection. It is found in the cilium. Its function is as follows. Small GTP-binding protein which cycles between an inactive GDP-bound and an active GTP-bound form, and the rate of cycling is regulated by guanine nucleotide exchange factors (GEF) and GTPase-activating proteins (GAP). Required for normal cytokinesis and cilia signaling. Requires assistance from GTPase-activating proteins (GAPs) like RP2 and PDE6D, in order to cycle between inactive GDP-bound and active GTP-bound forms. Required for targeting proteins to the cilium, including myristoylated NPHP3 and prenylated INPP5E. Targets NPHP3 to the ciliary membrane by releasing myristoylated NPHP3 from UNC119B cargo adapter into the cilium. Required for PKD1:PKD2 complex targeting from the trans-Golgi network to the cilium. The protein is ADP-ribosylation factor-like protein 3 (ARL3) of Sus scrofa (Pig).